Consider the following 397-residue polypeptide: Argininosuccinate synthase (397 aa).

8-16 serves as a coordination point for ATP; sequence AYSGGLDTS. Tyr-87 contributes to the L-citrulline binding site. Gly-117 lines the ATP pocket. L-aspartate is bound by residues Thr-119, Asn-123, and Asp-124. Position 123 (Asn-123) interacts with L-citrulline. Residues Arg-127, Ser-175, Glu-259, and Tyr-271 each coordinate L-citrulline.

It belongs to the argininosuccinate synthase family. Type 1 subfamily. As to quaternary structure, homotetramer.

The protein resides in the cytoplasm. The catalysed reaction is L-citrulline + L-aspartate + ATP = 2-(N(omega)-L-arginino)succinate + AMP + diphosphate + H(+). The protein operates within amino-acid biosynthesis; L-arginine biosynthesis; L-arginine from L-ornithine and carbamoyl phosphate: step 2/3. The sequence is that of Argininosuccinate synthase from Streptomyces clavuligerus.